The primary structure comprises 426 residues: Neuromedin-U receptor 1 (426 aa).

The Extracellular portion of the chain corresponds to 1-65 (MTPLCLNCSV…QTELFMPICA (65 aa)). 3 N-linked (GlcNAc...) asparagine glycosylation sites follow: asparagine 7, asparagine 27, and asparagine 41. The helical transmembrane segment at 66–86 (TYLLIFVVGAVGNGLTCLVIL) threads the bilayer. Residues 87–97 (RHKAMRTPTNY) are Cytoplasmic-facing. The chain crosses the membrane as a helical span at residues 98 to 118 (YLFSLAVSDLLVLLVGLPLEL). Residues 119–138 (YEMWHNYPFLLGVGGCYFRT) lie on the Extracellular side of the membrane. Cysteine 134 and cysteine 219 are disulfide-bonded. A helical membrane pass occupies residues 139 to 161 (LLFEMVCLASVLNVTALSVERYV). Topologically, residues 162-181 (AVVHPLQARSMVTRAHVRRV) are cytoplasmic. Residues 182–202 (LGAVWGLAMLCSLPNTSLHGI) traverse the membrane as a helical segment. At 203–235 (RQLHVPCRGPVPDSAVCMLVRPRALYNMVVQTT) the chain is on the extracellular side. The chain crosses the membrane as a helical span at residues 236-256 (ALLFFCLPMAIMSVLYLLIGL). Over 257-294 (RLRRERLLLMQEAKGRGSAAARSRYTCRLQQHDRGRRQ) the chain is Cytoplasmic. The chain crosses the membrane as a helical span at residues 295–315 (VTKMLFVLVVVFGICWAPFHA). The Extracellular portion of the chain corresponds to 316-338 (DRVMWSVVSQWTDGLHLAFQHVH). The helical transmembrane segment at 339–359 (VISGIFFYLGSAANPVLYSLM) threads the bilayer. At 360–426 (SSRFRETFQE…PEAQQETDPS (67 aa)) the chain is on the cytoplasmic side.

Belongs to the G-protein coupled receptor 1 family. Expressed in greatest abundance in peripheral organs, particularly in elements of the gastrointestinal and urogenital systems with highest levels in testes. In central nervous system structures express levels are much lower than those seen in peripheral organs. Within the CNS, has been detected in highest abundance in the cerebellum, dorsal root ganglia, hippocampus, and spinal cord.

It localises to the cell membrane. Functionally, receptor for the neuromedin-U and neuromedin-S neuropeptides. This chain is Neuromedin-U receptor 1 (NMUR1), found in Homo sapiens (Human).